The primary structure comprises 297 residues: tRNA pseudouridine synthase A (297 aa).

D57 serves as the catalytic Nucleophile. Y115 provides a ligand contact to substrate.

This sequence belongs to the tRNA pseudouridine synthase TruA family. As to quaternary structure, homodimer.

The enzyme catalyses uridine(38/39/40) in tRNA = pseudouridine(38/39/40) in tRNA. Functionally, formation of pseudouridine at positions 38, 39 and 40 in the anticodon stem and loop of transfer RNAs. The chain is tRNA pseudouridine synthase A from Nitratidesulfovibrio vulgaris (strain ATCC 29579 / DSM 644 / CCUG 34227 / NCIMB 8303 / VKM B-1760 / Hildenborough) (Desulfovibrio vulgaris).